Consider the following 219-residue polypeptide: Inner membrane protein YghB (219 aa).

The Cytoplasmic segment spans residues 1-17; it reads MAVIQDIIAALWQHDFA. A helical transmembrane segment spans residues 18–38; that stretch reads ALADPHIVSVVYFVMFATLFL. Residues 39-67 are Periplasmic-facing; sequence ENGLLPASFLPGDSLLILAGALIAQGVMD. A helical membrane pass occupies residues 68–88; the sequence is FLPTIAILTAAASLGCWLSYI. The Cytoplasmic segment spans residues 89 to 160; the sequence is QGRWLGNTKT…RRFQFFNWLS (72 aa). The chain crosses the membrane as a helical span at residues 161–181; that stretch reads GLLWVSVVTSFGYALSMIPFV. Topologically, residues 182-191 are periplasmic; that stretch reads KRHEDQVMTF. Residues 192–212 form a helical membrane-spanning segment; it reads LMILPIALLTAGLLGTLFVVI. Residues 213 to 219 are Cytoplasmic-facing; the sequence is KKKYCNA.

This sequence belongs to the DedA family.

It is found in the cell inner membrane. The protein is Inner membrane protein YghB (yghB) of Escherichia coli O6:H1 (strain CFT073 / ATCC 700928 / UPEC).